The sequence spans 230 residues: Ureidoacrylate amidohydrolase RutB (230 aa).

Asp24 serves as the catalytic Proton acceptor. Residue Lys133 is part of the active site. Cys166 serves as the catalytic Nucleophile.

This sequence belongs to the isochorismatase family. RutB subfamily.

It carries out the reaction (Z)-3-ureidoacrylate + H2O + H(+) = (Z)-3-aminoacrylate + NH4(+) + CO2. It catalyses the reaction (Z)-3-ureidoacrylate + H2O = (Z)-3-aminoacrylate + carbamate + H(+). The catalysed reaction is (Z)-2-methylureidoacrylate + H2O + H(+) = (Z)-2-methylaminoacrylate + NH4(+) + CO2. In terms of biological role, hydrolyzes ureidoacrylate to form aminoacrylate and carbamate. The carbamate hydrolyzes spontaneously, thereby releasing one of the nitrogen atoms of the pyrimidine ring as ammonia and one of its carbon atoms as CO2. This chain is Ureidoacrylate amidohydrolase RutB, found in Escherichia coli O150:H5 (strain SE15).